The chain runs to 263 residues: Oxidoreductase UcpA (263 aa).

Residue 10-32 participates in NAD(+) binding; that stretch reads LITGALQGIGEGIARTFARHGAN. Substrate is bound at residue Ser141. The active-site Proton acceptor is the Tyr155.

Belongs to the short-chain dehydrogenases/reductases (SDR) family.

This chain is Oxidoreductase UcpA (ucpA), found in Escherichia coli (strain K12).